Consider the following 481-residue polypeptide: Cerebral cavernous malformations 2 protein-like (481 aa).

Disordered regions lie at residues 161–193 and 214–290; these read PVPAGMDGSPGGSGRDPGPPGAAPEKRRVGTAE and EARA…DPQN. The segment covering 184 to 193 has biased composition (basic and acidic residues); sequence PEKRRVGTAE. The span at 214-223 shows a compositional bias: gly residues; sequence EARAAGGGGS. Over residues 237 to 251 the composition is skewed to basic and acidic residues; sequence WERRQTFSGSWERRH.

This sequence belongs to the CCM2 family.

The sequence is that of Cerebral cavernous malformations 2 protein-like (Ccm2l) from Mus musculus (Mouse).